The chain runs to 239 residues: Ribonuclease HII (239 aa).

In terms of domain architecture, RNase H type-2 spans 18–231 (KIIVGLDEAG…SKNLLKEIEE (214 aa)). Residues aspartate 24, glutamate 25, and aspartate 125 each contribute to the a divalent metal cation site.

Belongs to the RNase HII family. Requires Mn(2+) as cofactor. Mg(2+) is required as a cofactor.

It is found in the cytoplasm. It carries out the reaction Endonucleolytic cleavage to 5'-phosphomonoester.. In terms of biological role, endonuclease that specifically degrades the RNA of RNA-DNA hybrids. The polypeptide is Ribonuclease HII (Methanococcus maripaludis (strain C6 / ATCC BAA-1332)).